The chain runs to 374 residues: Alanine racemase (374 aa).

Lys35 serves as the catalytic Proton acceptor; specific for D-alanine. Lys35 carries the post-translational modification N6-(pyridoxal phosphate)lysine. A substrate-binding site is contributed by Arg130. The Proton acceptor; specific for L-alanine role is filled by Tyr261. Met309 contributes to the substrate binding site.

The protein belongs to the alanine racemase family. The cofactor is pyridoxal 5'-phosphate.

It carries out the reaction L-alanine = D-alanine. Its pathway is amino-acid biosynthesis; D-alanine biosynthesis; D-alanine from L-alanine: step 1/1. Catalyzes the interconversion of L-alanine and D-alanine. May also act on other amino acids. This chain is Alanine racemase (alr), found in Albidiferax ferrireducens (strain ATCC BAA-621 / DSM 15236 / T118) (Rhodoferax ferrireducens).